A 163-amino-acid polypeptide reads, in one-letter code: Arginine repressor (163 aa).

It belongs to the ArgR family.

It is found in the cytoplasm. It participates in amino-acid biosynthesis; L-arginine biosynthesis [regulation]. Its function is as follows. Regulates arginine biosynthesis genes. This is Arginine repressor from Anaeromyxobacter dehalogenans (strain 2CP-C).